Here is a 453-residue protein sequence, read N- to C-terminus: Iron-sulfur cluster assembly SufBD family protein slr0076 (453 aa).

Belongs to the iron-sulfur cluster assembly SufBD family.

The polypeptide is Iron-sulfur cluster assembly SufBD family protein slr0076 (Synechocystis sp. (strain ATCC 27184 / PCC 6803 / Kazusa)).